Here is a 462-residue protein sequence, read N- to C-terminus: Exodeoxyribonuclease 7 large subunit (462 aa).

This sequence belongs to the XseA family. Heterooligomer composed of large and small subunits.

It is found in the cytoplasm. The catalysed reaction is Exonucleolytic cleavage in either 5'- to 3'- or 3'- to 5'-direction to yield nucleoside 5'-phosphates.. In terms of biological role, bidirectionally degrades single-stranded DNA into large acid-insoluble oligonucleotides, which are then degraded further into small acid-soluble oligonucleotides. In Pectobacterium carotovorum subsp. carotovorum (strain PC1), this protein is Exodeoxyribonuclease 7 large subunit.